A 110-amino-acid polypeptide reads, in one-letter code: Large ribosomal subunit protein uL22 (110 aa).

This sequence belongs to the universal ribosomal protein uL22 family. In terms of assembly, part of the 50S ribosomal subunit.

Its function is as follows. This protein binds specifically to 23S rRNA; its binding is stimulated by other ribosomal proteins, e.g. L4, L17, and L20. It is important during the early stages of 50S assembly. It makes multiple contacts with different domains of the 23S rRNA in the assembled 50S subunit and ribosome. In terms of biological role, the globular domain of the protein is located near the polypeptide exit tunnel on the outside of the subunit, while an extended beta-hairpin is found that lines the wall of the exit tunnel in the center of the 70S ribosome. The protein is Large ribosomal subunit protein uL22 of Enterobacter sp. (strain 638).